A 440-amino-acid polypeptide reads, in one-letter code: Heat stress transcription factor A-4b (440 aa).

Residues 121 to 181 (NERKDYEEEI…QRSLISYVRE (61 aa)) are a coiled coil. The interval 133–183 (LKSDNAALSSELQNNTLKKLNMEKRMQALEEKLFVVEDQQRSLISYVREIV) is hydrophobic repeat HR-A/B. A Nuclear export signal motif is present at residues 158–163 (MQALEE). Residues 200–204 (RKKRR) carry the Nuclear localization signal motif. The tract at residues 264–417 (DISYDDGVPG…EMKSGDRQHL (154 aa)) is disordered. Residues 295–305 (SPPTRMRTSSA) are compositionally biased toward polar residues. Basic and acidic residues predominate over residues 333–343 (SRVDTRAKVSE). The AHA motif lies at 375 to 384 (DGFWQQFLTE). The segment covering 380 to 390 (QFLTEQPGSSD) has biased composition (polar residues). The segment covering 391 to 417 (AHQEAQSERRDGGNKVDEMKSGDRQHL) has biased composition (basic and acidic residues).

It belongs to the HSF family. Class A subfamily. In terms of assembly, homotrimer. Post-translationally, exhibits temperature-dependent phosphorylation.

Its subcellular location is the cytoplasm. The protein resides in the nucleus. Its function is as follows. Transcriptional regulator that specifically binds DNA of heat shock promoter elements (HSE). The polypeptide is Heat stress transcription factor A-4b (HSFA4B) (Oryza sativa subsp. japonica (Rice)).